The following is a 577-amino-acid chain: MADVAGPSRPSAAAFWSRDFSDEEQSVVYVPGISAEGNVRSRHKLMSPKADVKLKTSRVTDASISMESLKGTGDSVDEQNSCRGEIKSASLKDLCLEDKRRIANLIKELARVSEEKEVTEERLKAEQESFEKKIRQLEEQNELIIKEREALQLQYRECQELLSLYQKYLSEQQEKLTMSLSELGAARMQEQQVSSRKSTLQCSSVELDGSYLSIARPQTYYQTKQRPKSAVQDSASESLIAFRNNSLKPVTLHHPKDDLDKIPSETTTCNCESPGRKPAVPTEKMPQEELHMKECPHLKPTPSQCCGHRLAADRVHDSHPTNMTPQHPKTHPESCSYCRLSWASLVHGGGALQPIETLKKQISEDRKQQLMLQKMELEIEKERLQHLLAQQETKLLLKQQQLHQSRLDYNCLLKSNCDGWLLGTSSSIKKHQDPPNSGENRKERKTVGFHSHMKDDAQWSCQKKDTCRPQRGTVTGVRKDASTSPMPTGSLKDFVTTASPSLQHTTSRYETSLLDLVQSLSPNSAPKPQRYPSREAGAWNHGTFRLSPLKSTRKKMGMHRTPEELEENQILEDIFFI.

Ser21 is subject to Phosphoserine. The stretch at 91-167 (LKDLCLEDKR…CQELLSLYQK (77 aa)) forms a coiled coil. Ser179 carries the phosphoserine modification. Residues 251–282 (TLHHPKDDLDKIPSETTTCNCESPGRKPAVPT) are disordered. Residues 254-263 (HPKDDLDKIP) show a composition bias toward basic and acidic residues. The stretch at 358–402 (LKKQISEDRKQQLMLQKMELEIEKERLQHLLAQQETKLLLKQQQL) forms a coiled coil. Disordered regions lie at residues 425–444 (SSSI…RKER), 449–492 (FHSH…GSLK), and 520–540 (LSPN…GAWN). The segment covering 449–468 (FHSHMKDDAQWSCQKKDTCR) has biased composition (basic and acidic residues). Phosphoserine is present on residues Ser490 and Ser521.

In terms of assembly, interacts (via N- and C-terminal domains) with SMC3 (via central hinge region). As to expression, widely expressed.

Competes with SMC1 for binding to SMC3. May affect the availability of SMC3 to engage in the formation of multimeric protein complexes. This Homo sapiens (Human) protein is Protein hinderin (KIAA1328).